Consider the following 345-residue polypeptide: MNPIINFILLFSMMAGTILAMTSHHWVYAWLGLELNTLAIIPIISKTHHPRATEASTKYFLIQAISSALFLLSGITNAYLYGTWDINHLSNNFSKILLTIALATKLGLAPVHFWLPEVLQGVPILTALIIATWQKVAPMALLIMTWNLIPTPITLTMGLLSTIIGGLGGLNQTPLRKMMAYSSIAHLGWMVIIITIAPNLTLLNLTLYMIFTSSAMLTMHLTISKTLQNAMHISHHSPIITSLFLLSLLSLGGLPPMSGFSPKWLILQELTLHHLTPLALSMALMALLSLMFYLRATYISTMTLSPSIITLKTTWRLKSVSTTSSLSMLTPPSLLILPIMPLLIQ.

9 consecutive transmembrane segments (helical) span residues 1–21 (MNPIINFILLFSMMAGTILAM), 25–45 (HWVYAWLGLELNTLAIIPIIS), 60–80 (FLIQAISSALFLLSGITNAYL), 113–133 (FWLPEVLQGVPILTALIIATW), 148–168 (LIPTPITLTMGLLSTIIGGLG), 191–211 (VIIITIAPNLTLLNLTLYMIF), 239–259 (IITSLFLLSLLSLGGLPPMSG), 274–294 (HLTPLALSMALMALLSLMFYL), and 324–344 (SSLSMLTPPSLLILPIMPLLI).

Belongs to the complex I subunit 2 family.

It localises to the mitochondrion inner membrane. It catalyses the reaction a ubiquinone + NADH + 5 H(+)(in) = a ubiquinol + NAD(+) + 4 H(+)(out). In terms of biological role, core subunit of the mitochondrial membrane respiratory chain NADH dehydrogenase (Complex I) that is believed to belong to the minimal assembly required for catalysis. Complex I functions in the transfer of electrons from NADH to the respiratory chain. The immediate electron acceptor for the enzyme is believed to be ubiquinone. This chain is NADH-ubiquinone oxidoreductase chain 2 (MT-ND2), found in Varanus baritji (Black-spotted ridge-tailed monitor).